Here is a 236-residue protein sequence, read N- to C-terminus: tRNA1(Val) (adenine(37)-N6)-methyltransferase (236 aa).

Belongs to the methyltransferase superfamily. tRNA (adenine-N(6)-)-methyltransferase family.

Its subcellular location is the cytoplasm. The enzyme catalyses adenosine(37) in tRNA1(Val) + S-adenosyl-L-methionine = N(6)-methyladenosine(37) in tRNA1(Val) + S-adenosyl-L-homocysteine + H(+). Specifically methylates the adenine in position 37 of tRNA(1)(Val) (anticodon cmo5UAC). In Shewanella sp. (strain MR-7), this protein is tRNA1(Val) (adenine(37)-N6)-methyltransferase.